The chain runs to 340 residues: Uroporphyrinogen decarboxylase (340 aa).

Substrate is bound by residues 21–25 (RQAGR), D71, Y148, S203, and H316.

Belongs to the uroporphyrinogen decarboxylase family. Homodimer.

The protein localises to the cytoplasm. The enzyme catalyses uroporphyrinogen III + 4 H(+) = coproporphyrinogen III + 4 CO2. It participates in porphyrin-containing compound metabolism; protoporphyrin-IX biosynthesis; coproporphyrinogen-III from 5-aminolevulinate: step 4/4. Functionally, catalyzes the decarboxylation of four acetate groups of uroporphyrinogen-III to yield coproporphyrinogen-III. In Campylobacter jejuni (strain RM1221), this protein is Uroporphyrinogen decarboxylase.